The following is a 94-amino-acid chain: Pyrimidine/purine nucleoside phosphorylase (94 aa).

This sequence belongs to the nucleoside phosphorylase PpnP family.

The catalysed reaction is a purine D-ribonucleoside + phosphate = a purine nucleobase + alpha-D-ribose 1-phosphate. It carries out the reaction adenosine + phosphate = alpha-D-ribose 1-phosphate + adenine. It catalyses the reaction cytidine + phosphate = cytosine + alpha-D-ribose 1-phosphate. The enzyme catalyses guanosine + phosphate = alpha-D-ribose 1-phosphate + guanine. The catalysed reaction is inosine + phosphate = alpha-D-ribose 1-phosphate + hypoxanthine. It carries out the reaction thymidine + phosphate = 2-deoxy-alpha-D-ribose 1-phosphate + thymine. It catalyses the reaction uridine + phosphate = alpha-D-ribose 1-phosphate + uracil. The enzyme catalyses xanthosine + phosphate = alpha-D-ribose 1-phosphate + xanthine. Catalyzes the phosphorolysis of diverse nucleosides, yielding D-ribose 1-phosphate and the respective free bases. Can use uridine, adenosine, guanosine, cytidine, thymidine, inosine and xanthosine as substrates. Also catalyzes the reverse reactions. The sequence is that of Pyrimidine/purine nucleoside phosphorylase from Escherichia coli (strain ATCC 8739 / DSM 1576 / NBRC 3972 / NCIMB 8545 / WDCM 00012 / Crooks).